A 327-amino-acid chain; its full sequence is Inactive peptidyl-prolyl cis-trans isomerase FKBP6 (327 aa).

The tract at residues Met1–Ser20 is disordered. A PPIase FKBP-type domain is found at Asp54 to Leu143. TPR repeat units follow at residues Ala171–Arg204, Leu219–Asn252, and Ala253–Asn286.

It belongs to the FKBP6 family. In terms of assembly, interacts with HSP72/HSPA2 and CLTC. Interacts with GAPDH; leading to inhibit GAPDH catalytic activity. Interacts (via TPR repeats) with HSP90.

It is found in the cytoplasm. The protein localises to the cytosol. It localises to the nucleus. Its subcellular location is the chromosome. Co-chaperone required during spermatogenesis to repress transposable elements and prevent their mobilization, which is essential for the germline integrity. Acts via the piRNA metabolic process, which mediates the repression of transposable elements during meiosis by forming complexes composed of piRNAs and Piwi proteins and govern the methylation and subsequent repression of transposons. Acts as a co-chaperone via its interaction with HSP90 and is required for the piRNA amplification process, the secondary piRNA biogenesis. May be required together with HSP90 in removal of 16 nucleotide ping-pong by-products from Piwi complexes, possibly facilitating turnover of Piwi complexes. The chain is Inactive peptidyl-prolyl cis-trans isomerase FKBP6 (Fkbp6) from Rattus norvegicus (Rat).